We begin with the raw amino-acid sequence, 424 residues long: CinA-like protein (424 aa).

Belongs to the CinA family.

The chain is CinA-like protein from Prochlorococcus marinus (strain MIT 9312).